A 173-amino-acid chain; its full sequence is Co-chaperone protein HscB homolog (173 aa).

In terms of domain architecture, J spans cysteine 5–isoleucine 77.

This sequence belongs to the HscB family. Interacts with HscA and stimulates its ATPase activity.

Functionally, co-chaperone involved in the maturation of iron-sulfur cluster-containing proteins. Seems to help targeting proteins to be folded toward HscA. This Pseudomonas putida (strain ATCC 700007 / DSM 6899 / JCM 31910 / BCRC 17059 / LMG 24140 / F1) protein is Co-chaperone protein HscB homolog.